A 283-amino-acid polypeptide reads, in one-letter code: MPGHELEDVINQRLNLYDVLELPTPLDVHTIYDDLPQIKRKYRTLALKYHPDKHPDNPSIIHKFHLLSTATNILTNADVRPHYDRWLIEFLRKTNDIERNKLIQKLEESESSTIPTTTPHPDLLQIQRHGELLRKLKHFNLPYGDWKHLNTQDQENASQHPYYDCSTLRIVLDNFLQSNNKSNCLSHLRNQVFITLSANEIYDIYFSERNNYSKDDSIIIYTVFDTPITAQHVFRNWSSGNLIPTVKDISPLIPLHYYSDFNLETELNDDIARLVSNEPILLD.

In terms of domain architecture, J spans 15–87 (NLYDVLELPT…DVRPHYDRWL (73 aa)).

The protein belongs to the DnaJ family. Belongs to the CWC complex (or CEF1-associated complex), a spliceosome sub-complex reminiscent of a late-stage spliceosome composed of the U2, U5 and U6 snRNAs and at least BUD13, BUD31, BRR2, CDC40, CEF1, CLF1, CUS1, CWC2, CWC15, CWC21, CWC22, CWC23, CWC24, CWC25, CWC27, ECM2, HSH155, IST3, ISY1, LEA1, MSL1, NTC20, PRP8, PRP9, PRP11, PRP19, PRP21, PRP22, PRP45, PRP46, SLU7, SMB1, SMD1, SMD2, SMD3, SMX2, SMX3, SNT309, SNU114, SPP2, SYF1, SYF2, RSE1 and YJU2.

It is found in the cytoplasm. It localises to the nucleus. In terms of biological role, involved in pre-mRNA splicing. May be involved in endoplasmic reticulum-associated protein degradation (ERAD) and required for growth at low and high temperatures. The polypeptide is Pre-mRNA-splicing factor CWC23 (CWC23) (Saccharomyces cerevisiae (strain ATCC 204508 / S288c) (Baker's yeast)).